The following is a 185-amino-acid chain: MAEPDIKSFERRMDGAVETLRKEFGGLRTGRASTTLLDPVYVDAYGSSSPLNQVATVGVPEPRLITVQVWDRSLVKAVEKAIREAGLGLNPQSDGQTLRVPIPELNQERRQELAKVAAKYAEQARVAVRNVRRDGMDMLKKLLKDGDISEDEQKTWADKVQALTDAHIKKIDEALATKEKEIMQV.

Belongs to the RRF family.

It localises to the cytoplasm. Functionally, responsible for the release of ribosomes from messenger RNA at the termination of protein biosynthesis. May increase the efficiency of translation by recycling ribosomes from one round of translation to another. The chain is Ribosome-recycling factor from Rhodospirillum centenum (strain ATCC 51521 / SW).